Reading from the N-terminus, the 176-residue chain is Mitochondrial inner membrane protein Mpv17 (176 aa).

Helical transmembrane passes span 18-38 (VQVL…QQLV), 53-73 (TMVS…YKVL), 94-114 (GGFA…LNGM), and 131-151 (LITN…LVPL).

The protein belongs to the peroxisomal membrane protein PXMP2/4 family. High levels in heart, kidney, and brain, intermediate levels in testis, and low levels in liver and spleen.

Its subcellular location is the mitochondrion inner membrane. Non-selective channel that modulates the membrane potential under normal conditions and oxidative stress, and is involved in mitochondrial homeostasis. Involved in mitochondrial deoxynucleoside triphosphates (dNTP) pool homeostasis and mitochondrial DNA (mtDNA) maintenance. May be involved in the regulation of reactive oxygen species metabolism and the control of oxidative phosphorylation. The polypeptide is Mitochondrial inner membrane protein Mpv17 (Mus musculus (Mouse)).